A 156-amino-acid chain; its full sequence is SsrA-binding protein (156 aa).

This sequence belongs to the SmpB family.

The protein resides in the cytoplasm. Required for rescue of stalled ribosomes mediated by trans-translation. Binds to transfer-messenger RNA (tmRNA), required for stable association of tmRNA with ribosomes. tmRNA and SmpB together mimic tRNA shape, replacing the anticodon stem-loop with SmpB. tmRNA is encoded by the ssrA gene; the 2 termini fold to resemble tRNA(Ala) and it encodes a 'tag peptide', a short internal open reading frame. During trans-translation Ala-aminoacylated tmRNA acts like a tRNA, entering the A-site of stalled ribosomes, displacing the stalled mRNA. The ribosome then switches to translate the ORF on the tmRNA; the nascent peptide is terminated with the 'tag peptide' encoded by the tmRNA and targeted for degradation. The ribosome is freed to recommence translation, which seems to be the essential function of trans-translation. The protein is SsrA-binding protein of Lactiplantibacillus plantarum (strain ATCC BAA-793 / NCIMB 8826 / WCFS1) (Lactobacillus plantarum).